The primary structure comprises 388 residues: Succinate--CoA ligase [ADP-forming] subunit beta (388 aa).

Residues 9–245 (KELLAGYGLP…KSQENERELK (237 aa)) enclose the ATP-grasp domain. Residues Lys46, 53 to 55 (GRG), Glu100, Tyr103, and Glu108 contribute to the ATP site. Asn200 and Asp214 together coordinate Mg(2+). Residues Asn265 and 322–324 (GIV) each bind substrate.

Belongs to the succinate/malate CoA ligase beta subunit family. Heterotetramer of two alpha and two beta subunits. Mg(2+) is required as a cofactor.

The enzyme catalyses succinate + ATP + CoA = succinyl-CoA + ADP + phosphate. The catalysed reaction is GTP + succinate + CoA = succinyl-CoA + GDP + phosphate. It participates in carbohydrate metabolism; tricarboxylic acid cycle; succinate from succinyl-CoA (ligase route): step 1/1. In terms of biological role, succinyl-CoA synthetase functions in the citric acid cycle (TCA), coupling the hydrolysis of succinyl-CoA to the synthesis of either ATP or GTP and thus represents the only step of substrate-level phosphorylation in the TCA. The beta subunit provides nucleotide specificity of the enzyme and binds the substrate succinate, while the binding sites for coenzyme A and phosphate are found in the alpha subunit. The protein is Succinate--CoA ligase [ADP-forming] subunit beta of Neisseria meningitidis serogroup C / serotype 2a (strain ATCC 700532 / DSM 15464 / FAM18).